A 707-amino-acid chain; its full sequence is Polyribonucleotide nucleotidyltransferase (707 aa).

Mg(2+) contacts are provided by Asp485 and Asp491. Residues 552-615 (PRITVINIPK…AAIKWIKGIV (64 aa)) form the KH domain. The 69-residue stretch at 621–689 (GEIYEGKVVK…DRGKVKLSMK (69 aa)) folds into the S1 motif domain.

It belongs to the polyribonucleotide nucleotidyltransferase family. Requires Mg(2+) as cofactor.

Its subcellular location is the cytoplasm. It catalyses the reaction RNA(n+1) + phosphate = RNA(n) + a ribonucleoside 5'-diphosphate. In terms of biological role, involved in mRNA degradation. Catalyzes the phosphorolysis of single-stranded polyribonucleotides processively in the 3'- to 5'-direction. In Rhodospirillum centenum (strain ATCC 51521 / SW), this protein is Polyribonucleotide nucleotidyltransferase.